The sequence spans 241 residues: ATP-dependent dethiobiotin synthetase BioD (241 aa).

ATP is bound at residue 13 to 18 (DIGKTV). A Mg(2+)-binding site is contributed by T17. K38 is a catalytic residue. S42 is a binding site for substrate. ATP-binding positions include D55, 116–119 (EGSG), and 180–181 (NK). Residues D55 and E116 each coordinate Mg(2+).

This sequence belongs to the dethiobiotin synthetase family. Homodimer. The cofactor is Mg(2+).

The protein resides in the cytoplasm. It catalyses the reaction (7R,8S)-7,8-diammoniononanoate + CO2 + ATP = (4R,5S)-dethiobiotin + ADP + phosphate + 3 H(+). The protein operates within cofactor biosynthesis; biotin biosynthesis; biotin from 7,8-diaminononanoate: step 1/2. Its function is as follows. Catalyzes a mechanistically unusual reaction, the ATP-dependent insertion of CO2 between the N7 and N8 nitrogen atoms of 7,8-diaminopelargonic acid (DAPA, also called 7,8-diammoniononanoate) to form a ureido ring. In Clostridium kluyveri (strain NBRC 12016), this protein is ATP-dependent dethiobiotin synthetase BioD.